A 152-amino-acid polypeptide reads, in one-letter code: Xanthine-guanine phosphoribosyltransferase (152 aa).

Residues 37-38, R69, and 88-96 each bind 5-phospho-alpha-D-ribose 1-diphosphate; these read RG and DDLVDTGGT. A GMP-binding site is contributed by R69. Residue D89 participates in Mg(2+) binding. Residues D92 and I135 each contribute to the guanine site. Xanthine is bound by residues D92 and I135. Residues 92 to 96 and 134 to 135 each bind GMP; these read DTGGT and WI.

Belongs to the purine/pyrimidine phosphoribosyltransferase family. XGPT subfamily. As to quaternary structure, homotetramer. Requires Mg(2+) as cofactor.

The protein resides in the cell inner membrane. It catalyses the reaction GMP + diphosphate = guanine + 5-phospho-alpha-D-ribose 1-diphosphate. The catalysed reaction is XMP + diphosphate = xanthine + 5-phospho-alpha-D-ribose 1-diphosphate. It carries out the reaction IMP + diphosphate = hypoxanthine + 5-phospho-alpha-D-ribose 1-diphosphate. The protein operates within purine metabolism; GMP biosynthesis via salvage pathway; GMP from guanine: step 1/1. Its pathway is purine metabolism; XMP biosynthesis via salvage pathway; XMP from xanthine: step 1/1. In terms of biological role, purine salvage pathway enzyme that catalyzes the transfer of the ribosyl-5-phosphate group from 5-phospho-alpha-D-ribose 1-diphosphate (PRPP) to the N9 position of the 6-oxopurines guanine and xanthine to form the corresponding ribonucleotides GMP (guanosine 5'-monophosphate) and XMP (xanthosine 5'-monophosphate), with the release of PPi. To a lesser extent, also acts on hypoxanthine. This Enterobacter sp. (strain 638) protein is Xanthine-guanine phosphoribosyltransferase.